The sequence spans 397 residues: Geranylgeranyl pyrophosphate synthase AN1592 (397 aa).

The tract at residues 1–67 is disordered; that stretch reads MSPPLDSALE…SHDSSASSNI (67 aa). Positions 13-42 are enriched in basic and acidic residues; that stretch reads SEYKETAFPRTEKDPSQYKEHDLVTPEKEI. Over residues 52 to 67 the composition is skewed to low complexity; that stretch reads SHSSHGSHDSSASSNI. Isopentenyl diphosphate contacts are provided by Lys120, Arg123, and His152. Mg(2+)-binding residues include Asp159 and Asp163. Arg168 provides a ligand contact to dimethylallyl diphosphate. Arg169 lines the isopentenyl diphosphate pocket. Residues Lys247, Thr248, and Gln281 each contribute to the dimethylallyl diphosphate site. Mg(2+) is bound at residue Asp284. Dimethylallyl diphosphate contacts are provided by Asn288, Lys298, and Lys308.

It belongs to the FPP/GGPP synthase family. Mg(2+) serves as cofactor.

It carries out the reaction isopentenyl diphosphate + dimethylallyl diphosphate = (2E)-geranyl diphosphate + diphosphate. The catalysed reaction is isopentenyl diphosphate + (2E)-geranyl diphosphate = (2E,6E)-farnesyl diphosphate + diphosphate. It catalyses the reaction isopentenyl diphosphate + (2E,6E)-farnesyl diphosphate = (2E,6E,10E)-geranylgeranyl diphosphate + diphosphate. It functions in the pathway secondary metabolite biosynthesis; terpenoid biosynthesis. Geranylgeranyl pyrophosphate synthase; part of the gene cluster that mediates the biosynthesis of the diterpene ent-pimara-8(14),15-diene (PD). Within the cluster, the HMG-CoA reductase AN1593 functions in the mevalonate pathway, which produces isoprenoid precursors. The geranylgeranyl pyrophosphate (GGPP) synthase AN1592 is needed in the formation of GGPP, the precursor for diterpenes. Lastly, the pimaradiene synthase pbcA performs the 2 cyclization steps that convert GGPP to ent-pimara-8(14),15-diene. The putative roles of the remaining cluster enzymes in ent-pimara-8(14),15-diene biosynthesis is unclear. The cytochrome P450 monooxygenase AN1598, the glutathione S-transferase AN1595, the oxidoreductases AN1596 and AN1597 probably function as decorative enzymes. It is possible that in biological conditions the compound is oxidized to ent-pimara-8(14),15-dien-19-oic acid, which is a bioactive diterpene compound predominant in many plant extracts. This is Geranylgeranyl pyrophosphate synthase AN1592 from Emericella nidulans (strain FGSC A4 / ATCC 38163 / CBS 112.46 / NRRL 194 / M139) (Aspergillus nidulans).